The chain runs to 357 residues: Protein ATP1B4 (357 aa).

The Nuclear portion of the chain corresponds to 1-110; that stretch reads MRRQLRSRRA…FLARTGQSWS (110 aa). The interval 15–80 is disordered; sequence YSYRYRLDDP…EEGQGQPTGN (66 aa). The span at 52–73 shows a compositional bias: acidic residues; it reads EEEEEEEEKEEEEEEEKEEEEG. A helical; Signal-anchor for type II membrane protein membrane pass occupies residues 111–131; that stretch reads LILLIYFFFYASLAAVITLCM. Residues 132 to 357 lie on the Perinuclear space side of the membrane; sequence YTLFLTISPY…RVIFTLNIET (226 aa).

It belongs to the X(+)/potassium ATPases subunit beta family. Associates with a SMAD7-transcriptional complex. Interacts with SNW1 and TOR1AIP1. According to PubMed:17592128, does not associate with known Na,K-ATPase alpha-subunits. Highly expressed in skeletal muscle and at a lower level in heart.

It localises to the nucleus inner membrane. May act as a transcriptional coregulator during muscle development through its interaction with SNW1. Has lost its ancestral function as a Na,K-ATPase beta-subunit. The protein is Protein ATP1B4 (ATP1B4) of Homo sapiens (Human).